Consider the following 109-residue polypeptide: Nucleoid-associated protein ETA_24730 (109 aa).

Belongs to the YbaB/EbfC family. In terms of assembly, homodimer.

The protein resides in the cytoplasm. It is found in the nucleoid. Functionally, binds to DNA and alters its conformation. May be involved in regulation of gene expression, nucleoid organization and DNA protection. The protein is Nucleoid-associated protein ETA_24730 of Erwinia tasmaniensis (strain DSM 17950 / CFBP 7177 / CIP 109463 / NCPPB 4357 / Et1/99).